The sequence spans 458 residues: Ig mu chain C region secreted form (458 aa).

Residues Val-1–Pro-106 are CH1. A disulfide bond links Cys-28 and Cys-90. 2 N-linked (GlcNAc...) asparagine glycosylation sites follow: Asn-46 and Asn-114. Positions Val-107–Thr-222 are CH2. Cysteines 137 and 200 form a disulfide. Residues Asn-212, Asn-261, Asn-277, and Asn-284 are each glycosylated (N-linked (GlcNAc...) asparagine). The CH3 stretch occupies residues Pro-223–Arg-327. Disulfide bonds link Cys-249/Cys-308 and Cys-356/Cys-418. Residues Glu-328–Tyr-458 form a CH4 region. A glycan (N-linked (GlcNAc...) asparagine) is linked at Asn-445.

It is found in the secreted. The polypeptide is Ig mu chain C region secreted form (Oryctolagus cuniculus (Rabbit)).